We begin with the raw amino-acid sequence, 72 residues long: Translation initiation factor IF-1 (72 aa).

Residues 1 to 72 form the S1-like domain; sequence MSKQDVIEVE…TRGRIVYRYK (72 aa).

Belongs to the IF-1 family. As to quaternary structure, component of the 30S ribosomal translation pre-initiation complex which assembles on the 30S ribosome in the order IF-2 and IF-3, IF-1 and N-formylmethionyl-tRNA(fMet); mRNA recruitment can occur at any time during PIC assembly.

It localises to the cytoplasm. Its function is as follows. One of the essential components for the initiation of protein synthesis. Stabilizes the binding of IF-2 and IF-3 on the 30S subunit to which N-formylmethionyl-tRNA(fMet) subsequently binds. Helps modulate mRNA selection, yielding the 30S pre-initiation complex (PIC). Upon addition of the 50S ribosomal subunit IF-1, IF-2 and IF-3 are released leaving the mature 70S translation initiation complex. The protein is Translation initiation factor IF-1 of Pelotomaculum thermopropionicum (strain DSM 13744 / JCM 10971 / SI).